We begin with the raw amino-acid sequence, 275 residues long: Interleukin-2 receptor subunit alpha (275 aa).

Positions 1–21 (MEPSLLMWRFFVFIVVPGCVT) are cleaved as a signal peptide. The Sushi 1 domain occupies 22 to 81 (EACHDDPPSLRNAMFKVFRYEVGTMINCDCKTGFRRVSAVMRCVGDSSHSAWENRCFCNS). Topologically, residues 22–243 (EACHDDPPSL…DTFIFTTEYQ (222 aa)) are extracellular. 3 disulfide bridges follow: cysteine 24/cysteine 64, cysteine 49/cysteine 77, and cysteine 51/cysteine 79. A glycan (N-linked (GlcNAc...) asparagine) is linked at asparagine 80. The segment at 88–130 (QVKQVTPAPEEHREKKHTDAQNQTQPPEEADLPGHCEEPPPWE) is disordered. The segment covering 96 to 106 (PEEHREKKHTD) has biased composition (basic and acidic residues). Asparagine 109 carries an N-linked (GlcNAc...) asparagine glycan. Basic and acidic residues predominate over residues 119–130 (LPGHCEEPPPWE). A Sushi 2 domain is found at 121–186 (GHCEEPPPWE…WTRPRLKCIR (66 aa)). Intrachain disulfides connect cysteine 123-cysteine 168 and cysteine 152-cysteine 184. A disordered region spans residues 188 to 221 (GEHGQASDDAEPQESTEAPPGSGTFLPTRMAGTT). A helical transmembrane segment spans residues 244 to 262 (IAVAGCTLLLASILLLSCL). Residues 263 to 275 (TWQRKWKKNRRTI) are Cytoplasmic-facing.

In terms of assembly, non-covalent dimer of an alpha and a beta subunit. IL2R exists in 3 different forms: a high affinity dimer, an intermediate affinity monomer (beta subunit), and a low affinity monomer (alpha subunit). The high and intermediate affinity forms also associate with a gamma subunit.

It is found in the membrane. In terms of biological role, receptor for interleukin-2. The receptor is involved in the regulation of immune tolerance by controlling regulatory T cells (TREGs) activity. TREGs suppress the activation and expansion of autoreactive T-cells. This is Interleukin-2 receptor subunit alpha (IL2RA) from Bos taurus (Bovine).